Consider the following 273-residue polypeptide: MTKLIIHLVSDSSVQTAKYAANSALAQFTSIKPKLYHWPMIRNLELLNEVLSKIESKHGIVLYTIADQELRKTLTKFCYELKIPCISIIGKIIKEMSVFSDIEIEKEQNFNYKFDKTYFDTLNAIDYAIRHDDGQMLNELPEADIILIGPSRTSKTPTSVFLAYNGLKAANIPYVYNCPFPDFIEKDIDQLVVGLVINPNRLIEIREARLNLLQINENKSYTDFNIIQKECLEVRKICEQRNWPVIDVSTRSIEETAALIMRIYYNRKNKYNK.

149-156 serves as a coordination point for ADP; sequence GPSRTSKT.

Belongs to the pyruvate, phosphate/water dikinase regulatory protein family. PDRP subfamily.

It catalyses the reaction N(tele)-phospho-L-histidyl/L-threonyl-[pyruvate, phosphate dikinase] + ADP = N(tele)-phospho-L-histidyl/O-phospho-L-threonyl-[pyruvate, phosphate dikinase] + AMP + H(+). It carries out the reaction N(tele)-phospho-L-histidyl/O-phospho-L-threonyl-[pyruvate, phosphate dikinase] + phosphate + H(+) = N(tele)-phospho-L-histidyl/L-threonyl-[pyruvate, phosphate dikinase] + diphosphate. In terms of biological role, bifunctional serine/threonine kinase and phosphorylase involved in the regulation of the pyruvate, phosphate dikinase (PPDK) by catalyzing its phosphorylation/dephosphorylation. This chain is Putative pyruvate, phosphate dikinase regulatory protein, found in Rickettsia canadensis (strain McKiel).